We begin with the raw amino-acid sequence, 414 residues long: Enolase (414 aa).

Gln162 contributes to the (2R)-2-phosphoglycerate binding site. Glu204 (proton donor) is an active-site residue. 3 residues coordinate Mg(2+): Asp239, Glu280, and Asp307. Positions 332, 361, 362, and 383 each coordinate (2R)-2-phosphoglycerate. Lys332 functions as the Proton acceptor in the catalytic mechanism.

Belongs to the enolase family. Mg(2+) serves as cofactor.

The protein localises to the cytoplasm. The protein resides in the secreted. It localises to the cell surface. It catalyses the reaction (2R)-2-phosphoglycerate = phosphoenolpyruvate + H2O. The protein operates within carbohydrate degradation; glycolysis; pyruvate from D-glyceraldehyde 3-phosphate: step 4/5. Its function is as follows. Catalyzes the reversible conversion of 2-phosphoglycerate (2-PG) into phosphoenolpyruvate (PEP). It is essential for the degradation of carbohydrates via glycolysis. The polypeptide is Enolase (Campylobacter jejuni (strain RM1221)).